Reading from the N-terminus, the 364-residue chain is RNA polymerase sigma factor SigA (364 aa).

Residues leucine 132 to threonine 202 form a sigma-70 factor domain-2 region. Positions aspartate 156–glutamine 159 match the Interaction with polymerase core subunit RpoC motif. A sigma-70 factor domain-3 region spans residues glutamate 211–tyrosine 287. The segment at valine 300–histidine 353 is sigma-70 factor domain-4. The segment at residues leucine 326–alanine 345 is a DNA-binding region (H-T-H motif).

The protein belongs to the sigma-70 factor family. RpoD/SigA subfamily. In terms of assembly, interacts transiently with the RNA polymerase catalytic core.

The protein resides in the cytoplasm. Functionally, sigma factors are initiation factors that promote the attachment of RNA polymerase to specific initiation sites and are then released. This sigma factor is the primary sigma factor during exponential growth. In Lactococcus lactis subsp. cremoris (Streptococcus cremoris), this protein is RNA polymerase sigma factor SigA.